Here is a 48-residue protein sequence, read N- to C-terminus: Fimbrial assembly protein, serogroup F1 (48 aa).

The polypeptide is Fimbrial assembly protein, serogroup F1 (fimB) (Dichelobacter nodosus (Bacteroides nodosus)).